We begin with the raw amino-acid sequence, 302 residues long: MSVPDVAVVKAFLIDLQNRICAGLQALDGQATFAADSWTRAEGGGGTSRVLTQGAVFEQAGVNFSHVTGAAMPASATAHRPELAGRSFEAMGVSLVIHPNNPYIPTTHANVRFFIAQKEGADPVWWFGGGFDLTPYYPFEEDVREWHQTSKDICAPFGDEVYPKYKKWCDEYFFLPHRNETRGVGGLFFDDLNQDGFEQSFSFMQAVGNGFLTAYAPIVERRKETEFGERERQFQLYRRGRYVEFNLVYDRGTLFGLQTGGRTESILMSMPPLVRWQYAYTPEAGSPEADLYDNYLKPRDWV.

S94 is a binding site for substrate. A divalent metal cation contacts are provided by H98 and H108. The active-site Proton donor is the H108. Substrate is bound at residue 110–112 (NVR). A divalent metal cation-binding residues include H147 and H177. The interval 242–277 (YVEFNLVYDRGTLFGLQTGGRTESILMSMPPLVRWQ) is important for dimerization. 260 to 262 (GGR) lines the substrate pocket.

It belongs to the aerobic coproporphyrinogen-III oxidase family. Homodimer. Requires a divalent metal cation as cofactor.

The protein localises to the cytoplasm. The catalysed reaction is coproporphyrinogen III + O2 + 2 H(+) = protoporphyrinogen IX + 2 CO2 + 2 H2O. It participates in porphyrin-containing compound metabolism; protoporphyrin-IX biosynthesis; protoporphyrinogen-IX from coproporphyrinogen-III (O2 route): step 1/1. Functionally, involved in the heme biosynthesis. Catalyzes the aerobic oxidative decarboxylation of propionate groups of rings A and B of coproporphyrinogen-III to yield the vinyl groups in protoporphyrinogen-IX. In Shewanella putrefaciens (strain CN-32 / ATCC BAA-453), this protein is Oxygen-dependent coproporphyrinogen-III oxidase.